The chain runs to 494 residues: Glycerol kinase (494 aa).

Threonine 12 is a binding site for ADP. 3 residues coordinate ATP: threonine 12, threonine 13, and serine 14. Threonine 12 is a binding site for sn-glycerol 3-phosphate. Position 16 (arginine 16) interacts with ADP. The sn-glycerol 3-phosphate site is built by arginine 82, glutamate 83, tyrosine 135, and aspartate 244. Residues arginine 82, glutamate 83, tyrosine 135, aspartate 244, and glutamine 245 each contribute to the glycerol site. Positions 266 and 309 each coordinate ADP. Threonine 266, glycine 309, glutamine 313, and glycine 409 together coordinate ATP. 2 residues coordinate ADP: glycine 409 and asparagine 413.

The protein belongs to the FGGY kinase family.

It carries out the reaction glycerol + ATP = sn-glycerol 3-phosphate + ADP + H(+). It functions in the pathway polyol metabolism; glycerol degradation via glycerol kinase pathway; sn-glycerol 3-phosphate from glycerol: step 1/1. Its activity is regulated as follows. Inhibited by fructose 1,6-bisphosphate (FBP). In terms of biological role, key enzyme in the regulation of glycerol uptake and metabolism. Catalyzes the phosphorylation of glycerol to yield sn-glycerol 3-phosphate. The protein is Glycerol kinase of Alteromonas mediterranea (strain DSM 17117 / CIP 110805 / LMG 28347 / Deep ecotype).